Reading from the N-terminus, the 1374-residue chain is DNA-directed RNA polymerase subunit beta (1374 aa).

The protein belongs to the RNA polymerase beta chain family. In terms of assembly, the RNAP catalytic core consists of 2 alpha, 1 beta, 1 beta' and 1 omega subunit. When a sigma factor is associated with the core the holoenzyme is formed, which can initiate transcription.

The enzyme catalyses RNA(n) + a ribonucleoside 5'-triphosphate = RNA(n+1) + diphosphate. DNA-dependent RNA polymerase catalyzes the transcription of DNA into RNA using the four ribonucleoside triphosphates as substrates. This Acidovorax ebreus (strain TPSY) (Diaphorobacter sp. (strain TPSY)) protein is DNA-directed RNA polymerase subunit beta.